The chain runs to 317 residues: MEKVYVAGAIPEVGLKLLQEHFEVEMYEGKGLVDKDTLIKGVKNATALISLLSTNVDKDVIDAGKDLKIIANYGAGFNNIDIEYAREKSIDVTNTPKASTNATADLTIGLVLAVARRIVEGDQLSRTTGFDGWAPLFFRGREVSGKTIGIIGLGEIGSAVARRARAFDMDVLYTGPNRKEEKEREIGAKYVDLDTLLKNADFITINAAYNPKMHHLIDTEQFKMMKSTVYLINASRGPIVHEQALVQALKDNEIEGAALDVYEFEPDITDDLKSLNNVVLTPHIGNATFEARDMMSKIVANAAISAVQGEKPQFVVN.

NAD(+) is bound by residues 155–156, 234–236, and D260; these read EI and ASR. The active site involves R236. Residue E265 is part of the active site. The active-site Proton donor is the H283. 283 to 286 provides a ligand contact to NAD(+); the sequence is HIGN.

Belongs to the D-isomer specific 2-hydroxyacid dehydrogenase family.

The sequence is that of Putative 2-hydroxyacid dehydrogenase SA2098 from Staphylococcus aureus (strain N315).